An 860-amino-acid chain; its full sequence is Valine--tRNA ligase (860 aa).

A 'HIGH' region motif is present at residues 43–53; the sequence is PTVSGALHVGH. The disordered stretch occupies residues 469–491; that stretch reads LPVDPSSDAPTGYQESQRNQPGG. Positions 574-578 match the 'KMSKS' region motif; the sequence is KMSKS. Lys577 serves as a coordination point for ATP.

Belongs to the class-I aminoacyl-tRNA synthetase family. ValS type 2 subfamily. Monomer.

Its subcellular location is the cytoplasm. The catalysed reaction is tRNA(Val) + L-valine + ATP = L-valyl-tRNA(Val) + AMP + diphosphate. In terms of biological role, catalyzes the attachment of valine to tRNA(Val). As ValRS can inadvertently accommodate and process structurally similar amino acids such as threonine, to avoid such errors, it has a 'posttransfer' editing activity that hydrolyzes mischarged Thr-tRNA(Val) in a tRNA-dependent manner. The chain is Valine--tRNA ligase from Salinispora tropica (strain ATCC BAA-916 / DSM 44818 / JCM 13857 / NBRC 105044 / CNB-440).